A 263-amino-acid chain; its full sequence is Endonuclease 8 (263 aa).

Pro-2 (schiff-base intermediate with DNA) is an active-site residue. The active-site Proton donor is the Glu-3. Catalysis depends on Lys-53, which acts as the Proton donor; for beta-elimination activity. DNA contacts are provided by Gln-70, Arg-125, and Asn-169. Residues 229 to 263 form an FPG-type zinc finger; it reads KVFHRDGEPCERCGSIIEKTTLSSRPFYWCPGCQH. Residue Arg-253 is the Proton donor; for delta-elimination activity of the active site.

This sequence belongs to the FPG family. Requires Zn(2+) as cofactor.

The enzyme catalyses 2'-deoxyribonucleotide-(2'-deoxyribose 5'-phosphate)-2'-deoxyribonucleotide-DNA = a 3'-end 2'-deoxyribonucleotide-(2,3-dehydro-2,3-deoxyribose 5'-phosphate)-DNA + a 5'-end 5'-phospho-2'-deoxyribonucleoside-DNA + H(+). In terms of biological role, involved in base excision repair of DNA damaged by oxidation or by mutagenic agents. Acts as a DNA glycosylase that recognizes and removes damaged bases. Has a preference for oxidized pyrimidines, such as thymine glycol, 5,6-dihydrouracil and 5,6-dihydrothymine. Has AP (apurinic/apyrimidinic) lyase activity and introduces nicks in the DNA strand. Cleaves the DNA backbone by beta-delta elimination to generate a single-strand break at the site of the removed base with both 3'- and 5'-phosphates. The protein is Endonuclease 8 of Escherichia coli O9:H4 (strain HS).